The chain runs to 195 residues: Peptide deformylase (195 aa).

Residues Cys-102 and His-144 each contribute to the Fe cation site. Residue Glu-145 is part of the active site. Fe cation is bound at residue His-148.

This sequence belongs to the polypeptide deformylase family. It depends on Fe(2+) as a cofactor.

The catalysed reaction is N-terminal N-formyl-L-methionyl-[peptide] + H2O = N-terminal L-methionyl-[peptide] + formate. Functionally, removes the formyl group from the N-terminal Met of newly synthesized proteins. Requires at least a dipeptide for an efficient rate of reaction. N-terminal L-methionine is a prerequisite for activity but the enzyme has broad specificity at other positions. The polypeptide is Peptide deformylase (Salinibacter ruber (strain DSM 13855 / M31)).